The primary structure comprises 190 residues: Protein GrpE (190 aa).

Residues 1-26 are compositionally biased toward basic and acidic residues; it reads MADKEKDAVIVDETEHVDVDSKESKK. Residues 1-31 form a disordered region; sequence MADKEKDAVIVDETEHVDVDSKESKKEKKTK.

It belongs to the GrpE family. In terms of assembly, homodimer.

It localises to the cytoplasm. Functionally, participates actively in the response to hyperosmotic and heat shock by preventing the aggregation of stress-denatured proteins, in association with DnaK and GrpE. It is the nucleotide exchange factor for DnaK and may function as a thermosensor. Unfolded proteins bind initially to DnaJ; upon interaction with the DnaJ-bound protein, DnaK hydrolyzes its bound ATP, resulting in the formation of a stable complex. GrpE releases ADP from DnaK; ATP binding to DnaK triggers the release of the substrate protein, thus completing the reaction cycle. Several rounds of ATP-dependent interactions between DnaJ, DnaK and GrpE are required for fully efficient folding. The protein is Protein GrpE of Acholeplasma laidlawii (strain PG-8A).